We begin with the raw amino-acid sequence, 253 residues long: MICOS complex subunit mic25 (253 aa).

Residues 1-89 (MGGSESTGRK…GAHKPTAAGV (89 aa)) are disordered. Gly2 carries the N-myristoyl glycine lipid modification. Basic and acidic residues predominate over residues 28–44 (RLSDEVVNRMKDSDLPS). Over residues 48 to 64 (STSAASGTASAPAAFPS) the composition is skewed to low complexity. Residues 94–178 (AEEDLYRRYE…EQLSSIEKKN (85 aa)) adopt a coiled-coil conformation. One can recognise a CHCH domain in the interval 206–248 (DPVCMNLQADILKCYSENKQERLNCSNLAKEYRKCVSAAQKNL). Short sequence motifs (cx9C motif) lie at residues 209–219 (CMNLQADILKC) and 230–240 (CSNLAKEYRKC). Cystine bridges form between Cys209/Cys240 and Cys219/Cys230.

This sequence belongs to the MICOS complex subunit Mic19 family. Metazoan Mic25 subfamily. As to quaternary structure, component of the mitochondrial contact site and cristae organizing system (MICOS) complex (also known as MINOS or MitOS complex).

Its subcellular location is the mitochondrion inner membrane. Functionally, component of the MICOS complex, a large protein complex of the mitochondrial inner membrane that plays crucial roles in the maintenance of crista junctions, inner membrane architecture, and formation of contact sites to the outer membrane. The polypeptide is MICOS complex subunit mic25 (chchd6) (Xenopus tropicalis (Western clawed frog)).